The chain runs to 172 residues: Large ribosomal subunit protein uL10 (172 aa).

The protein belongs to the universal ribosomal protein uL10 family. As to quaternary structure, part of the ribosomal stalk of the 50S ribosomal subunit. The N-terminus interacts with L11 and the large rRNA to form the base of the stalk. The C-terminus forms an elongated spine to which 3 L12 dimers bind in a sequential fashion forming a heptameric L10(L12)2(L12)2(L12)2 complex.

In terms of biological role, forms part of the ribosomal stalk, playing a central role in the interaction of the ribosome with GTP-bound translation factors. The sequence is that of Large ribosomal subunit protein uL10 from Agrobacterium fabrum (strain C58 / ATCC 33970) (Agrobacterium tumefaciens (strain C58)).